The primary structure comprises 457 residues: Metacaspase-1 (457 aa).

The disordered stretch occupies residues 1-149; that stretch reads MSWNQYPGGG…PQLQGQGGQS (149 aa). Gly residues predominate over residues 7 to 18; sequence PGGGHHQQGGYG. Pro residues predominate over residues 20–56; the sequence is RPPPPQWAQQGPPPPPNMGYRPPPPPQAYYNNPPPPQ. Residues 57–83 show a composition bias toward low complexity; that stretch reads QYQRPAPQQNGYQQGGYQQQQQSQGNY. Catalysis depends on residues His247 and Cys303.

The protein belongs to the peptidase C14B family.

Functionally, involved in cell death (apoptosis). This is Metacaspase-1 (MCA1) from Cryptococcus neoformans var. neoformans serotype D (strain JEC21 / ATCC MYA-565) (Filobasidiella neoformans).